Consider the following 518-residue polypeptide: ATP synthase subunit alpha (518 aa).

Residue 169–176 (GDRQTGKT) coordinates ATP.

This sequence belongs to the ATPase alpha/beta chains family. As to quaternary structure, F-type ATPases have 2 components, CF(1) - the catalytic core - and CF(0) - the membrane proton channel. CF(1) has five subunits: alpha(3), beta(3), gamma(1), delta(1), epsilon(1). CF(0) has three main subunits: a(1), b(2) and c(9-12). The alpha and beta chains form an alternating ring which encloses part of the gamma chain. CF(1) is attached to CF(0) by a central stalk formed by the gamma and epsilon chains, while a peripheral stalk is formed by the delta and b chains.

Its subcellular location is the cell membrane. It catalyses the reaction ATP + H2O + 4 H(+)(in) = ADP + phosphate + 5 H(+)(out). Produces ATP from ADP in the presence of a proton gradient across the membrane. The alpha chain is a regulatory subunit. This chain is ATP synthase subunit alpha, found in Mycoplasma genitalium (strain ATCC 33530 / DSM 19775 / NCTC 10195 / G37) (Mycoplasmoides genitalium).